A 213-amino-acid chain; its full sequence is ATP-dependent Clp protease proteolytic subunit (213 aa).

S114 (nucleophile) is an active-site residue. Residue H139 is part of the active site.

It belongs to the peptidase S14 family. In terms of assembly, fourteen ClpP subunits assemble into 2 heptameric rings which stack back to back to give a disk-like structure with a central cavity, resembling the structure of eukaryotic proteasomes.

It localises to the cytoplasm. The catalysed reaction is Hydrolysis of proteins to small peptides in the presence of ATP and magnesium. alpha-casein is the usual test substrate. In the absence of ATP, only oligopeptides shorter than five residues are hydrolyzed (such as succinyl-Leu-Tyr-|-NHMec, and Leu-Tyr-Leu-|-Tyr-Trp, in which cleavage of the -Tyr-|-Leu- and -Tyr-|-Trp bonds also occurs).. In terms of biological role, cleaves peptides in various proteins in a process that requires ATP hydrolysis. Has a chymotrypsin-like activity. Plays a major role in the degradation of misfolded proteins. The protein is ATP-dependent Clp protease proteolytic subunit of Pseudomonas putida (strain GB-1).